The following is a 68-amino-acid chain: UPF0435 protein SA1696 (68 aa).

It belongs to the UPF0435 family.

The protein is UPF0435 protein SA1696 of Staphylococcus aureus (strain N315).